We begin with the raw amino-acid sequence, 438 residues long: Trigger factor (438 aa).

Residues 160–245 (DDKVTIDFVG…VKKIQQAELP (86 aa)) enclose the PPIase FKBP-type domain.

The protein belongs to the FKBP-type PPIase family. Tig subfamily.

It localises to the cytoplasm. The catalysed reaction is [protein]-peptidylproline (omega=180) = [protein]-peptidylproline (omega=0). In terms of biological role, involved in protein export. Acts as a chaperone by maintaining the newly synthesized protein in an open conformation. Functions as a peptidyl-prolyl cis-trans isomerase. The protein is Trigger factor of Francisella tularensis subsp. holarctica (strain OSU18).